An 847-amino-acid chain; its full sequence is MNKTTEYIDAMPIAASEKAALPKTDIRAVHQALDAEHRTWAREDDSPQGSVKARLEQAWPDSLADGQLIKDDEGRDQLKAMPEAKRSSMFPDPWRTNPVGRFWDRLRGRDVTPRYLARLTKEEQESEQKWRTVGTIRRYILLILTLAQTVVATWYMKTILPYQGWALINPMDMVGQDVWVSFMQLLPYMLQTGILILFAVLFCWVSAGFWTALMGFLQLLIGRDKYSISASTVGDEPLNPEHRTALIMPICNEDVNRVFAGLRATWESVKATGNAKHFDVYILSDSYNPDICVAEQKAWMELIAEVGGEGQIFYRRRRRRVKRKSGNIDDFCRRWGSQYSYMVVLDADSVMTGDCLCGLVRLMEANPNAGIIQSSPKASGMDTLYARCQQFATRVYGPLFTAGLHFWQLGESHYWGHNAIIRVKPFIEHCALAPLPGEGSFAGSILSHDFVEAALMRRAGWGVWIAYDLPGSYEELPPNLLDELKRDRRWCHGNLMNFRLFLVKGMHPVHRAVFLTGVMSYLSAPLWFMFLALSTALQVVHALTEPQYFLQPRQLFPVWPQWRPELAIALFASTMVLLFLPKLLSILLIWCKGTKEYGGFWRVTLSLLLEVLFSVLLAPVRMLFHTVFVVSAFLGWEVVWNSPQRDDDSTSWGEAFKRHGSQLLLGLVWAVGMAWLDLRFLFWLAPIVFSLILSPFVSVISSRATVGLRTKRWKLFLIPEEYSPPQVLVDTDRFLEMNRQRSLDDGFMHAVFNPSFNALATAMATARHRASKVLEIARDRHVEQALNETPEKLNRDRRLVLLSDPVTMARLHFRVWNSPERYSSWVSYYEGIKLNPLALRKPDAASQ.

Over Met1–Arg138 the chain is Cytoplasmic. Residues Tyr139 to Met156 form a helical membrane-spanning segment. The Periplasmic segment spans residues Lys157–Gly193. The helical transmembrane segment at Ile194–Phe216 threads the bilayer. At Leu217–Arg511 the chain is on the cytoplasmic side. The chain crosses the membrane as a helical span at residues Ala512 to Ser534. Residues Thr535–Ala567 are Periplasmic-facing. Residues Ile568 to Trp590 traverse the membrane as a helical segment. The Cytoplasmic segment spans residues Cys591–Arg602. Residues Val603 to His625 form a helical membrane-spanning segment. Residues Thr626–Arg679 lie on the Periplasmic side of the membrane. A helical transmembrane segment spans residues Phe680–Ser702. Residues Arg703–Gln847 lie on the Cytoplasmic side of the membrane.

Belongs to the glycosyltransferase 2 family. OpgH subfamily.

Its subcellular location is the cell inner membrane. The protein operates within glycan metabolism; osmoregulated periplasmic glucan (OPG) biosynthesis. Its function is as follows. Involved in the biosynthesis of osmoregulated periplasmic glucans (OPGs). In Escherichia coli O6:H1 (strain CFT073 / ATCC 700928 / UPEC), this protein is Glucans biosynthesis glucosyltransferase H.